The primary structure comprises 235 residues: Protein GrpE (235 aa).

Composition is skewed to basic and acidic residues over residues 1 to 16 and 24 to 35; these read MENK…HEKN and NNVKKENLHEDQ. A disordered region spans residues 1–51; it reads MENKNQKHNNEFHEKNQQSQKDNNNVKKENLHEDQSDLNDANFDDGGKKNK.

Belongs to the GrpE family. Homodimer.

It is found in the cytoplasm. In terms of biological role, participates actively in the response to hyperosmotic and heat shock by preventing the aggregation of stress-denatured proteins, in association with DnaK and GrpE. It is the nucleotide exchange factor for DnaK and may function as a thermosensor. Unfolded proteins bind initially to DnaJ; upon interaction with the DnaJ-bound protein, DnaK hydrolyzes its bound ATP, resulting in the formation of a stable complex. GrpE releases ADP from DnaK; ATP binding to DnaK triggers the release of the substrate protein, thus completing the reaction cycle. Several rounds of ATP-dependent interactions between DnaJ, DnaK and GrpE are required for fully efficient folding. This chain is Protein GrpE, found in Malacoplasma penetrans (strain HF-2) (Mycoplasma penetrans).